Here is a 1207-residue protein sequence, read N- to C-terminus: Disease resistance protein RPP2B (1207 aa).

The TIR domain maps to 15–180 (CEFDVFVSFR…EIVKNTFRML (166 aa)). Glu-89 is a catalytic residue. The NB-ARC domain occupies 201–445 (ELEKLLMFDN…FLDIACFFRS (245 aa)). 9 LRR repeats span residues 607–630 (PKEL…EKNT), 653–676 (AKNL…VKQM), 677–699 (NELI…GFKI), 720–743 (SESI…IESL), 744–767 (HSLI…LYKL), 769–791 (SLQE…KEKM), 792–815 (ECLE…CLSN), 840–862 (NSFL…KFSS), and 863–886 (LRSL…IEKL).

This sequence belongs to the disease resistance TIR-NB-LRR family.

It carries out the reaction NAD(+) + H2O = ADP-D-ribose + nicotinamide + H(+). Its function is as follows. Disease resistance protein that cooperates with RPP2A to confer resistance to Hyaloperonospora parasitica isolate Cala2. The polypeptide is Disease resistance protein RPP2B (Arabidopsis thaliana (Mouse-ear cress)).